The sequence spans 322 residues: Phosphatidylserine decarboxylase proenzyme (322 aa).

Residues aspartate 90, histidine 147, and serine 254 each act as charge relay system; for autoendoproteolytic cleavage activity in the active site. Serine 254 acts as the Schiff-base intermediate with substrate; via pyruvic acid; for decarboxylase activity in catalysis. Serine 254 is subject to Pyruvic acid (Ser); by autocatalysis. The segment at 294-322 (EVEPAPLPADEIKAEHDASPLVDNKKDDT) is disordered. Positions 303–322 (DEIKAEHDASPLVDNKKDDT) are enriched in basic and acidic residues.

Belongs to the phosphatidylserine decarboxylase family. PSD-B subfamily. Prokaryotic type I sub-subfamily. As to quaternary structure, heterodimer of a large membrane-associated beta subunit and a small pyruvoyl-containing alpha subunit. The cofactor is pyruvate. Is synthesized initially as an inactive proenzyme. Formation of the active enzyme involves a self-maturation process in which the active site pyruvoyl group is generated from an internal serine residue via an autocatalytic post-translational modification. Two non-identical subunits are generated from the proenzyme in this reaction, and the pyruvate is formed at the N-terminus of the alpha chain, which is derived from the carboxyl end of the proenzyme. The autoendoproteolytic cleavage occurs by a canonical serine protease mechanism, in which the side chain hydroxyl group of the serine supplies its oxygen atom to form the C-terminus of the beta chain, while the remainder of the serine residue undergoes an oxidative deamination to produce ammonia and the pyruvoyl prosthetic group on the alpha chain. During this reaction, the Ser that is part of the protease active site of the proenzyme becomes the pyruvoyl prosthetic group, which constitutes an essential element of the active site of the mature decarboxylase.

Its subcellular location is the cell membrane. It carries out the reaction a 1,2-diacyl-sn-glycero-3-phospho-L-serine + H(+) = a 1,2-diacyl-sn-glycero-3-phosphoethanolamine + CO2. Its pathway is phospholipid metabolism; phosphatidylethanolamine biosynthesis; phosphatidylethanolamine from CDP-diacylglycerol: step 2/2. Catalyzes the formation of phosphatidylethanolamine (PtdEtn) from phosphatidylserine (PtdSer). The sequence is that of Phosphatidylserine decarboxylase proenzyme from Salmonella paratyphi C (strain RKS4594).